Here is a 508-residue protein sequence, read N- to C-terminus: MYNVFQMAVWLPAQNKFYLPPQPITRILSTDEYVTRTNLFYHATSERLLLVGHPLFEISSNQTVTIPKVSPNAFRVFRVRFADPNRFAFGDKAIFNPETERLVWGLRGIEIGRGQPLGIGITGHPLLNKLDDAENPTNYINTHANGDSRQNTAFDAKQTQMFLVGCTPASGEHWTSSRCPGEQVKLGDCPRVQMIESVIEDGDMMDIGFGAMDFAALQQDKSDVPLDVVQATCKYPDYIRMNHEAYGNSMFFFARREQMYTRHFFTRGGSVGDKEAVPQSLYLTADAEPRTTLATTNYVGTPSGSMVSSDVQLFNRSYWLQRCQGQNNGICWRNQLFITVGDNTRGTSLSISMKNNASTTYSNANFNDFLRHTEEFDLSFIVQLCKVKLTPENLAYIHTMDPNILEDWQLSVSQPPTNPLEDQYRFLGSSLAAKCPEQAPPEPQTDPYSQYKFWEVDLTERMSEQLDQFPLGRKFLYQSGMTQRTATSSTTKRKTVRVSTSAKRRRKA.

The interval 480 to 508 is disordered; that stretch reads GMTQRTATSSTTKRKTVRVSTSAKRRRKA. Positions 491–508 are enriched in basic residues; the sequence is TKRKTVRVSTSAKRRRKA.

The protein belongs to the papillomaviridae L1 protein family. Self-assembles into homopentamers. The capsid has an icosahedral symmetry and consists of 72 capsomers, with each capsomer being a pentamer of L1. Interacts with the minor capsid protein L2; this interaction is necessary for viral genome encapsidation. Interacts with protein E2; this interaction enhances E2-dependent replication and transcription activation.

It is found in the virion. The protein resides in the host nucleus. Forms an icosahedral capsid with a T=7 symmetry and a 50 nm diameter. The capsid is composed of 72 pentamers linked to each other by disulfide bonds and associated with L2 proteins. Binds to heparan sulfate proteoglycans on cell surface of basal layer keratinocytes to provide initial virion attachment. This binding mediates a conformational change in the virus capsid that facilitates efficient infection. The virion enters the host cell via endocytosis. During virus trafficking, L1 protein dissociates from the viral DNA and the genomic DNA is released to the host nucleus. The virion assembly takes place within the cell nucleus. Encapsulates the genomic DNA together with protein L2. This Human papillomavirus type 1 (Human papillomavirus type 1a) protein is Major capsid protein L1.